Reading from the N-terminus, the 327-residue chain is Ribosomal RNA small subunit methyltransferase H (327 aa).

Residues 42–44, Asp-61, Leu-95, Asp-109, and Gln-116 contribute to the S-adenosyl-L-methionine site; that span reads GGH.

This sequence belongs to the methyltransferase superfamily. RsmH family.

Its subcellular location is the cytoplasm. It carries out the reaction cytidine(1402) in 16S rRNA + S-adenosyl-L-methionine = N(4)-methylcytidine(1402) in 16S rRNA + S-adenosyl-L-homocysteine + H(+). Specifically methylates the N4 position of cytidine in position 1402 (C1402) of 16S rRNA. This chain is Ribosomal RNA small subunit methyltransferase H, found in Desulfovibrio desulfuricans (strain ATCC 27774 / DSM 6949 / MB).